A 453-amino-acid polypeptide reads, in one-letter code: 3-phosphoshikimate 1-carboxyvinyltransferase (453 aa).

A disordered region spans residues 1–27; the sequence is MSHDSEPQPVTATPGGPLNGSLKPPGD. Residues K28, S29, and R33 each coordinate 3-phosphoshikimate. Residue K28 coordinates phosphoenolpyruvate. G101 and R129 together coordinate phosphoenolpyruvate. 4 residues coordinate 3-phosphoshikimate: S175, Q177, D330, and K357. Residue Q177 participates in phosphoenolpyruvate binding. D330 functions as the Proton acceptor in the catalytic mechanism. 2 residues coordinate phosphoenolpyruvate: R361 and R405.

Belongs to the EPSP synthase family. In terms of assembly, monomer.

Its subcellular location is the cytoplasm. The catalysed reaction is 3-phosphoshikimate + phosphoenolpyruvate = 5-O-(1-carboxyvinyl)-3-phosphoshikimate + phosphate. The protein operates within metabolic intermediate biosynthesis; chorismate biosynthesis; chorismate from D-erythrose 4-phosphate and phosphoenolpyruvate: step 6/7. Functionally, catalyzes the transfer of the enolpyruvyl moiety of phosphoenolpyruvate (PEP) to the 5-hydroxyl of shikimate-3-phosphate (S3P) to produce enolpyruvyl shikimate-3-phosphate and inorganic phosphate. This Methylorubrum extorquens (strain CM4 / NCIMB 13688) (Methylobacterium extorquens) protein is 3-phosphoshikimate 1-carboxyvinyltransferase.